Reading from the N-terminus, the 111-residue chain is Large ribosomal subunit protein uL22 (111 aa).

The protein belongs to the universal ribosomal protein uL22 family. As to quaternary structure, part of the 50S ribosomal subunit.

This protein binds specifically to 23S rRNA; its binding is stimulated by other ribosomal proteins, e.g. L4, L17, and L20. It is important during the early stages of 50S assembly. It makes multiple contacts with different domains of the 23S rRNA in the assembled 50S subunit and ribosome. Its function is as follows. The globular domain of the protein is located near the polypeptide exit tunnel on the outside of the subunit, while an extended beta-hairpin is found that lines the wall of the exit tunnel in the center of the 70S ribosome. The protein is Large ribosomal subunit protein uL22 of Acidithiobacillus ferrooxidans (strain ATCC 23270 / DSM 14882 / CIP 104768 / NCIMB 8455) (Ferrobacillus ferrooxidans (strain ATCC 23270)).